Here is a 135-residue protein sequence, read N- to C-terminus: uncharacterized protein (135 aa).

This is an uncharacterized protein from Aquifex aeolicus (strain VF5).